The primary structure comprises 235 residues: Sugar fermentation stimulation protein homolog (235 aa).

This sequence belongs to the SfsA family.

The polypeptide is Sugar fermentation stimulation protein homolog (Azotobacter vinelandii (strain DJ / ATCC BAA-1303)).